The sequence spans 509 residues: Histone deacetylase 2 (509 aa).

The interval 24–338 (RRVCYFYDPE…WCYETGVALG (315 aa)) is histone deacetylase. His158 functions as the Proton donor/acceptor in the catalytic mechanism. Asp193, His195, and Asp281 together coordinate Zn(2+). Residues 394-509 (PSVQFEERIP…NAKNEPGSSL (116 aa)) form a disordered region. Composition is skewed to basic and acidic residues over residues 398 to 409 (FEERIPETKLPE), 418 to 434 (DERH…DHKP), and 448 to 472 (VKRE…HKVP). Residues 481 to 494 (SSKQVPTADANSMA) show a composition bias toward polar residues.

The protein belongs to the histone deacetylase family. HD Type 1 subfamily. It depends on Zn(2+) as a cofactor. Expressed in roots.

It is found in the nucleus. The enzyme catalyses N(6)-acetyl-L-lysyl-[histone] + H2O = L-lysyl-[histone] + acetate. Its function is as follows. Responsible for the deacetylation of lysine residues on the N-terminal part of the core histones (H2A, H2B, H3 and H4). Histone deacetylation gives a tag for epigenetic repression and plays an important role in transcriptional regulation, cell cycle progression and developmental events. Histone deacetylases act via the formation of large multiprotein complexes. This chain is Histone deacetylase 2, found in Oryza sativa subsp. japonica (Rice).